Here is a 318-residue protein sequence, read N- to C-terminus: Replication factor C small subunit (318 aa).

Position 43–50 (43–50 (GSVGTGKT)) interacts with ATP.

Belongs to the activator 1 small subunits family. RfcS subfamily. In terms of assembly, heteromultimer composed of small subunits (RfcS) and large subunits (RfcL).

Its function is as follows. Part of the RFC clamp loader complex which loads the PCNA sliding clamp onto DNA. The chain is Replication factor C small subunit from Thermoplasma volcanium (strain ATCC 51530 / DSM 4299 / JCM 9571 / NBRC 15438 / GSS1).